The chain runs to 851 residues: Pentatricopeptide repeat-containing protein At3g54980, mitochondrial (851 aa).

Residues 1–26 (MRSLLVFRKIPSRIRLRNLRNNKPFC) constitute a mitochondrion transit peptide. PPR repeat units lie at residues 162–196 (NSRA…DVIP), 197–231 (FFPY…GVDG), 232–266 (DNVT…GAEP), 267–301 (DSLL…KLCV), 303–337 (SQET…GISM), 338–372 (NVVA…GPSP), 373–407 (NSVT…GLTP), 408–438 (SVFH…SFET), 442–476 (NVFV…GIGP), 477–511 (NVVS…GLKP), 512–546 (NNYT…NIEV), 547–577 (NGVV…MIEE), 583–617 (SCMS…GISP), 618–652 (NVIT…GVKL), 653–687 (DIPA…GLNP), 688–722 (SQPI…GLRC), 723–757 (DLGT…GLVP), 758–792 (DEII…NVTP), and 793–827 (NVLI…GILP).

This sequence belongs to the PPR family. P subfamily.

It localises to the mitochondrion. This is Pentatricopeptide repeat-containing protein At3g54980, mitochondrial from Arabidopsis thaliana (Mouse-ear cress).